Here is a 109-residue protein sequence, read N- to C-terminus: Sperm-specific class P protein 16 (109 aa).

Residues 2–109 enclose the MSP domain; the sequence is SLTADPPACT…TVTIPMSATA (108 aa).

As to expression, expressed at higher level in testis.

This Caenorhabditis elegans protein is Sperm-specific class P protein 16 (ssp-16).